Reading from the N-terminus, the 127-residue chain is Calcium-binding protein PBP1 (127 aa).

The span at 1-18 (MASPKSSTRPNQENQEPQ) shows a compositional bias: polar residues. Positions 1–20 (MASPKSSTRPNQENQEPQFQ) are disordered. In terms of domain architecture, EF-hand spans 72-107 (LTDDDVRYMINEGDFDRDGALNQMEFCVLMFRLSPE). Ca(2+) is bound by residues aspartate 85, aspartate 87, aspartate 89, and glutamate 96.

Interacts with PID.

Functionally, potential calcium sensor that binds calcium in vitro. The polypeptide is Calcium-binding protein PBP1 (PBP1) (Arabidopsis thaliana (Mouse-ear cress)).